The chain runs to 433 residues: AP-2 complex subunit mu (433 aa).

Residues 168 to 432 (RNELFLDVLE…IGRSGIYETR (265 aa)) enclose the MHD domain. The a 1,2-diacyl-sn-glycero-3-phospho-(1D-myo-inositol-3,4,5-trisphosphate) site is built by K339, K343, and K352.

The protein belongs to the adaptor complexes medium subunit family. Adaptor protein complex 2 (AP-2) is a heterotetramer composed of two large adaptins (alpha-type subunit and beta-type subunit), a medium adaptin (mu-type subunit) and a small adaptin (sigma-type subunit).

Its subcellular location is the cell membrane. It localises to the membrane. It is found in the coated pit. Functionally, component of the adaptor complexes which link clathrin to receptors in coated vesicles. Clathrin-associated protein complexes are believed to interact with the cytoplasmic tails of membrane proteins, leading to their selection and concentration. AP50 is a subunit of the plasma membrane adaptor. The complex binds polyphosphoinositide-containing lipids. This Gallus gallus (Chicken) protein is AP-2 complex subunit mu (AP2M1).